A 420-amino-acid chain; its full sequence is Protein PEA2 (420 aa).

The span at 132–153 (LTKENNNSFPNSKRARSSTNMG) shows a compositional bias: polar residues. The interval 132–169 (LTKENNNSFPNSKRARSSTNMGGTDKFNKGAYHTDKAD) is disordered. A compositionally biased stretch (basic and acidic residues) spans 157–169 (KFNKGAYHTDKAD). At S230 the chain carries Phosphoserine. Residues 323–363 (NSSRHNFGMSSPASSPVTWDPSSPSSVGSPTSGSGSRSLSI) are disordered. The span at 325–339 (SRHNFGMSSPASSPV) shows a compositional bias: polar residues. Low complexity predominate over residues 343–362 (PSSPSSVGSPTSGSGSRSLS).

Functionally, localized to sites of polarized growth and is required for efficient mating and bipolar budding. This chain is Protein PEA2 (PEA2), found in Saccharomyces cerevisiae (strain ATCC 204508 / S288c) (Baker's yeast).